Consider the following 763-residue polypeptide: Phosphoglycerol transferase I (763 aa).

4 helical membrane passes run 1–21 (MSELLSFALFLASVLIYAWKA), 26–46 (WWFAATLTVLGLFVVLNITLF), 77–97 (ILPGIGIVLGLTAVFGALGWI), and 108–128 (FGYSLLALLLALGSVDASPAF).

This sequence belongs to the OpgB family.

The protein resides in the cell inner membrane. The catalysed reaction is a phosphatidylglycerol + a membrane-derived-oligosaccharide D-glucose = a 1,2-diacyl-sn-glycerol + a membrane-derived-oligosaccharide 6-(glycerophospho)-D-glucose.. The protein operates within glycan metabolism; osmoregulated periplasmic glucan (OPG) biosynthesis. Transfers a phosphoglycerol residue from phosphatidylglycerol to the membrane-bound nascent glucan backbones. This Escherichia coli (strain 55989 / EAEC) protein is Phosphoglycerol transferase I.